The chain runs to 1072 residues: Guanylyl cyclase C (1072 aa).

A signal peptide spans 1 to 19; it reads MTSLLGLAVRLLLFQPALM. Residues 20-433 are Extracellular-facing; it reads VFWASQVRQN…VPGLGPQILM (414 aa). N-linked (GlcNAc...) asparagine glycosylation is found at asparagine 32, asparagine 75, asparagine 79, asparagine 179, asparagine 188, asparagine 195, asparagine 284, asparagine 307, asparagine 345, and asparagine 402. The helical transmembrane segment at 434–454 threads the bilayer; it reads IAVFTLTGILVVLLLIALLVL. The Cytoplasmic segment spans residues 455 to 1072; sequence RKYRRDHALR…NNSDHDSTYF (618 aa). The Protein kinase domain occupies 489 to 748; the sequence is LKIDDDRRRD…KIESTLAKIF (260 aa). A Guanylate cyclase domain is found at 823 to 953; the sequence is TIYFSDIVGF…DTVNTASRME (131 aa).

It belongs to the adenylyl cyclase class-4/guanylyl cyclase family. In terms of assembly, homotrimer. Interacts via its C-terminal region with NHERF4. Interacts with the lectin chaperone VIP36. In terms of processing, glycosylation at Asn-75 and/or Asn-79 is required for interaction with VIP36 while glycosylation at Asn-345 and Asn-402 modulates ligand-mediated GC-C activation.

Its subcellular location is the cell membrane. It is found in the endoplasmic reticulum membrane. It catalyses the reaction GTP = 3',5'-cyclic GMP + diphosphate. Guanylyl cyclase that catalyzes synthesis of cyclic GMP (cGMP) from GTP. The polypeptide is Guanylyl cyclase C (Gucy2c) (Mus musculus (Mouse)).